The chain runs to 161 residues: Transcriptional repressor NrdR (161 aa).

The span at 1-11 (MQCPHCQHHNS) shows a compositional bias: basic residues. Positions 1 to 21 (MQCPHCQHHNSRVLESRSSEG) are disordered. Residues 3–34 (CPHCQHHNSRVLESRSSEGGQSIRRRRECLEC) fold into a zinc finger. The ATP-cone domain occupies 49–139 (VTVIKQDGER…VYGRFQGIAD (91 aa)).

Belongs to the NrdR family. It depends on Zn(2+) as a cofactor.

Its function is as follows. Negatively regulates transcription of bacterial ribonucleotide reductase nrd genes and operons by binding to NrdR-boxes. The polypeptide is Transcriptional repressor NrdR (Synechocystis sp. (strain ATCC 27184 / PCC 6803 / Kazusa)).